A 460-amino-acid polypeptide reads, in one-letter code: tRNA modification GTPase MnmE (460 aa).

(6S)-5-formyl-5,6,7,8-tetrahydrofolate-binding residues include arginine 29, glutamate 91, and lysine 132. In terms of domain architecture, TrmE-type G spans 227–383; sequence GISIALIGKT…LIDTIIKKCG (157 aa). Residue asparagine 237 coordinates K(+). Residues 237 to 242, 256 to 262, and 281 to 284 each bind GTP; these read NVGKSS, TNIPGTT, and DTAG. Mg(2+) is bound at residue serine 241. Positions 256, 258, and 261 each coordinate K(+). Threonine 262 is a binding site for Mg(2+). Lysine 460 contributes to the (6S)-5-formyl-5,6,7,8-tetrahydrofolate binding site.

Belongs to the TRAFAC class TrmE-Era-EngA-EngB-Septin-like GTPase superfamily. TrmE GTPase family. As to quaternary structure, homodimer. Heterotetramer of two MnmE and two MnmG subunits. The cofactor is K(+).

It localises to the cytoplasm. In terms of biological role, exhibits a very high intrinsic GTPase hydrolysis rate. Involved in the addition of a carboxymethylaminomethyl (cmnm) group at the wobble position (U34) of certain tRNAs, forming tRNA-cmnm(5)s(2)U34. The protein is tRNA modification GTPase MnmE of Prochlorococcus marinus (strain MIT 9215).